We begin with the raw amino-acid sequence, 245 residues long: 1-acyl-sn-glycerol-3-phosphate acyltransferase (245 aa).

The HXXXXD motif signature appears at 73–78 (HQNNYD).

The protein belongs to the 1-acyl-sn-glycerol-3-phosphate acyltransferase family.

The protein resides in the cell inner membrane. The enzyme catalyses a 1-acyl-sn-glycero-3-phosphate + an acyl-CoA = a 1,2-diacyl-sn-glycero-3-phosphate + CoA. It participates in phospholipid metabolism; CDP-diacylglycerol biosynthesis; CDP-diacylglycerol from sn-glycerol 3-phosphate: step 2/3. Its function is as follows. Converts lysophosphatidic acid (LPA) into phosphatidic acid by incorporating an acyl moiety at the 2 position. This enzyme can utilize either acyl-CoA or acyl-acyl-carrier-protein as the fatty acyl donor. This Salmonella typhi protein is 1-acyl-sn-glycerol-3-phosphate acyltransferase (plsC).